The sequence spans 360 residues: NAD(P)H-quinone oxidoreductase subunit 1, chloroplastic (360 aa).

The next 8 membrane-spanning stretches (helical) occupy residues 30 to 50 (FLPI…LVWL), 98 to 118 (FSIG…VIPF), 127 to 147 (FNIG…GLLM), 165 to 185 (AAQS…ISLL), 203 to 223 (FWGW…ISSL), 253 to 273 (FGLF…FVTV), 297 to 317 (IFGT…FLFI), and 340 to 360 (FLLP…VFSL).

This sequence belongs to the complex I subunit 1 family. NDH is composed of at least 16 different subunits, 5 of which are encoded in the nucleus.

It is found in the plastid. The protein resides in the chloroplast thylakoid membrane. The enzyme catalyses a plastoquinone + NADH + (n+1) H(+)(in) = a plastoquinol + NAD(+) + n H(+)(out). It catalyses the reaction a plastoquinone + NADPH + (n+1) H(+)(in) = a plastoquinol + NADP(+) + n H(+)(out). NDH shuttles electrons from NAD(P)H:plastoquinone, via FMN and iron-sulfur (Fe-S) centers, to quinones in the photosynthetic chain and possibly in a chloroplast respiratory chain. The immediate electron acceptor for the enzyme in this species is believed to be plastoquinone. Couples the redox reaction to proton translocation, and thus conserves the redox energy in a proton gradient. The protein is NAD(P)H-quinone oxidoreductase subunit 1, chloroplastic of Aethionema cordifolium (Lebanon stonecress).